Here is a 48-residue protein sequence, read N- to C-terminus: Large ribosomal subunit protein bL34 (48 aa).

It belongs to the bacterial ribosomal protein bL34 family.

This chain is Large ribosomal subunit protein bL34, found in Gloeothece citriformis (strain PCC 7424) (Cyanothece sp. (strain PCC 7424)).